A 744-amino-acid chain; its full sequence is Cell division cycle protein 27 homolog B (744 aa).

Residues 101–134 (AAGHYLLGLIYKYTDRRKNAAQQFKQSLTIDPLL) form a TPR 1 repeat. The span at 180 to 199 (NEERNSTSTKNTSSEDYSPR) shows a compositional bias: polar residues. Disordered stretches follow at residues 180-218 (NEER…NFHS) and 359-390 (ENMD…NDQE). The span at 363–374 (EGVRGEPFDDSR) shows a compositional bias: basic and acidic residues. Positions 375 to 387 (PNTASTTGSMASN) are enriched in polar residues. TPR repeat units lie at residues 450–483 (GWVL…SPYC), 518–551 (PQSW…NPRF), 553–585 (YAHT…DTRH), 587–619 (NAWY…NPSS), 621–653 (VIMS…DRKN), 655–687 (LPMY…APSE), and 688–721 (SSVY…KPPA).

This sequence belongs to the APC3/CDC27 family. As to quaternary structure, the APC/C is composed of at least 10 subunits. Can homodimerize. Interacts with APC2, APC10, FZR2 and FZR3. Interacts with PANS1. Interacts with SAMBA. Specifically expressed in dividing and elongating cells.

Its subcellular location is the nucleus. It functions in the pathway protein modification; protein ubiquitination. Functionally, component of the anaphase promoting complex/cyclosome (APC/C), a cell cycle-regulated E3 ubiquitin-protein ligase complex that controls progression through mitosis and the G1 phase of the cell cycle. The APC/C complex controls several key steps in the cell cycle by mediating ubiquitination and subsequent degradation of target proteins such as cyclins. The APC/C complex is required for the female gametophyte development and is involved in several aspect of development by controlling cell division and cell elongation. Involved in the control of endoreduplication. Functionally redundant with CDC27A in the control of gametophyte development. The chain is Cell division cycle protein 27 homolog B (CDC27B) from Arabidopsis thaliana (Mouse-ear cress).